Reading from the N-terminus, the 140-residue chain is Probable glycine cleavage system H protein 3 (140 aa).

Residues 29–110 enclose the Lipoyl-binding domain; sequence VVSIGVTDLG…PYDSWIVKIR (82 aa). At Lys70 the chain carries N6-lipoyllysine.

This sequence belongs to the GcvH family. As to quaternary structure, the glycine cleavage system is composed of four proteins: P, T, L and H. It depends on (R)-lipoate as a cofactor.

In terms of biological role, the glycine cleavage system catalyzes the degradation of glycine. The H protein shuttles the methylamine group of glycine from the P protein to the T protein. This is Probable glycine cleavage system H protein 3 from Saccharolobus solfataricus (strain ATCC 35092 / DSM 1617 / JCM 11322 / P2) (Sulfolobus solfataricus).